The sequence spans 277 residues: Bifunctional protein FolD 1 (277 aa).

Residues 162 to 164 and Ser187 each bind NADP(+); that span reads GDS.

The protein belongs to the tetrahydrofolate dehydrogenase/cyclohydrolase family. In terms of assembly, homodimer.

The enzyme catalyses (6R)-5,10-methylene-5,6,7,8-tetrahydrofolate + NADP(+) = (6R)-5,10-methenyltetrahydrofolate + NADPH. The catalysed reaction is (6R)-5,10-methenyltetrahydrofolate + H2O = (6R)-10-formyltetrahydrofolate + H(+). It participates in one-carbon metabolism; tetrahydrofolate interconversion. In terms of biological role, catalyzes the oxidation of 5,10-methylenetetrahydrofolate to 5,10-methenyltetrahydrofolate and then the hydrolysis of 5,10-methenyltetrahydrofolate to 10-formyltetrahydrofolate. The sequence is that of Bifunctional protein FolD 1 from Syntrophomonas wolfei subsp. wolfei (strain DSM 2245B / Goettingen).